A 55-amino-acid polypeptide reads, in one-letter code: U-reduvitoxin-Pr2a (55 aa).

An N-terminal signal peptide occupies residues 1–21; sequence MMKFLLVLFLITITLITMAYS. Intrachain disulfides connect cysteine 26–cysteine 41, cysteine 33–cysteine 46, and cysteine 40–cysteine 51.

The protein belongs to the venom Ptu1-like knottin family. In terms of tissue distribution, expressed by the venom gland (posterior main gland) (at protein level).

It localises to the secreted. In terms of biological role, binds reversibly and blocks P/Q-type voltage-gated calcium channels (Cav). The protein is U-reduvitoxin-Pr2a of Platymeris rhadamanthus (Red spot assassin bug).